Here is a 30-residue protein sequence, read N- to C-terminus: uncharacterized protein (30 aa).

This is an uncharacterized protein from Treponema pallidum (strain Nichols).